The primary structure comprises 892 residues: Ice-binding protein 1 (892 aa).

The N-terminal stretch at 1-23 (MNHSIKKTYLVFTMLLGFILLAG) is a signal peptide. The N-palmitoyl cysteine moiety is linked to residue Cys24. Cys24 carries S-diacylglycerol cysteine lipidation. BIG2 domains follow at residues 43 to 111 (TSIA…ITAS), 134 to 205 (TALA…SLGS), 221 to 288 (SIAL…ITAD), 306 to 386 (TSIM…TVTV), 392 to 471 (TSIA…TNLT), 478 to 558 (NSIV…NLTV), and 565 to 638 (SIDV…QASL). The short motif at 866–869 (TGAN) is the Ice-binding site motif (T-A/G-X-T/N) element.

This sequence belongs to the ice-binding protein family.

It is found in the cell outer membrane. In terms of biological role, ice-binding adhesion protein that adsorbs this bacterium onto ice to maintain a favorable position in its aquatic habitat. Inhibits growth of the ice crystals. Has high thermal hysteresis (TH) activity, which is the ability to lower the freezing point of an aqueous solution below its melting point. The TH activity of this protein is approximately 1.4 degrees Celsius at 25 uM and little below 2 degrees Celsius at 80 uM. The sequence is that of Ice-binding protein 1 from Shewanella frigidimarina (strain NCIMB 400).